A 302-amino-acid polypeptide reads, in one-letter code: tRNA dimethylallyltransferase (302 aa).

Residue 9–16 (GPTAAGKS) participates in ATP binding. Position 11-16 (11-16 (TAAGKS)) interacts with substrate. The interval 34–37 (DSRQ) is interaction with substrate tRNA.

It belongs to the IPP transferase family. Monomer. Mg(2+) is required as a cofactor.

It catalyses the reaction adenosine(37) in tRNA + dimethylallyl diphosphate = N(6)-dimethylallyladenosine(37) in tRNA + diphosphate. Its function is as follows. Catalyzes the transfer of a dimethylallyl group onto the adenine at position 37 in tRNAs that read codons beginning with uridine, leading to the formation of N6-(dimethylallyl)adenosine (i(6)A). The protein is tRNA dimethylallyltransferase of Gloeobacter violaceus (strain ATCC 29082 / PCC 7421).